Here is a 474-residue protein sequence, read N- to C-terminus: Synaptotagmin-17 (474 aa).

Residues 60 to 117 form a disordered region; it reads WLMASRSNDKDGDSVHTASDVPLTPRTNSPDGRRSSSDTSKSTYSLTRRISSLDSRRP. Residues 96–117 show a composition bias toward low complexity; it reads SDTSKSTYSLTRRISSLDSRRP. Phosphoserine is present on residues serine 118 and serine 119. C2 domains are found at residues 184-310 and 321-455; these read QLGM…HWWK and ELGE…EQWH.

This sequence belongs to the synaptotagmin family. As to expression, expressed in brain and kidney.

It localises to the membrane. Plays a role in dendrite formation by melanocytes. In Rattus norvegicus (Rat), this protein is Synaptotagmin-17 (Syt17).